The following is a 99-amino-acid chain: Large ribosomal subunit protein bL21 (99 aa).

This sequence belongs to the bacterial ribosomal protein bL21 family. In terms of assembly, part of the 50S ribosomal subunit. Contacts protein L20.

Functionally, this protein binds to 23S rRNA in the presence of protein L20. The protein is Large ribosomal subunit protein bL21 of Mesomycoplasma hyopneumoniae (strain 7448) (Mycoplasma hyopneumoniae).